A 538-amino-acid chain; its full sequence is Putative cysteine ligase BshC (538 aa).

Residues 248–268 (ISKYKEVQEGLRNQQEVIKEL) adopt a coiled-coil conformation.

Belongs to the BshC family.

Its function is as follows. Involved in bacillithiol (BSH) biosynthesis. May catalyze the last step of the pathway, the addition of cysteine to glucosamine malate (GlcN-Mal) to generate BSH. The protein is Putative cysteine ligase BshC of Bacillus cereus (strain G9842).